A 162-amino-acid chain; its full sequence is Selenoprotein F (162 aa).

The first 28 residues, 1 to 28 (MAARRDGWLGPAFGLRLLLATVLQTVSA), serve as a signal peptide directing secretion. Position 93 (selenocysteine 93) is a non-standard amino acid, selenocysteine.

The protein belongs to the selenoprotein M/F family. Forms a tight complex with UGGT1/UGCGL1. Interacts with UGGT2/UGCGL2. Interacts with RDH11.

It is found in the endoplasmic reticulum lumen. Its function is as follows. May be involved in redox reactions associated with the formation of disulfide bonds. May contribute to the quality control of protein folding in the endoplasmic reticulum. May regulate protein folding by enhancing the catalytic activity of UGGT1/UGCGL1 and UGGT2/UGCGL2. The protein is Selenoprotein F of Bos taurus (Bovine).